Reading from the N-terminus, the 723-residue chain is Beta-xylosidase (723 aa).

The first 19 residues, 1–19 (MKKLWLMGLLLASFFTTVA), serve as a signal peptide directing secretion.

It belongs to the glycosyl hydrolase 3 family.

The protein resides in the periplasm. Its function is as follows. Xylosidase involved in ulvan degradation. Ulvan is the main polysaccharide component of the Ulvales (green seaweed) cell wall. It is composed of disaccharide building blocks comprising 3-sulfated rhamnose (Rha3S) linked to D-glucuronic acid (GlcA), L-iduronic acid (IduA), or D-xylose (Xyl). Beta-xylosidase converts Xyl-Rha3S, a product of alpha-L-rhamnosidase acting on Rha-Xyl-Rha3S oligosaccharides, further to Xyl and Rha3S. The enzyme is able to degrade 4-methylumbelliferyl-beta-D-xylopyranoside (MUX) in vitro. In Formosa agariphila (strain DSM 15362 / KCTC 12365 / LMG 23005 / KMM 3901 / M-2Alg 35-1), this protein is Beta-xylosidase.